Consider the following 679-residue polypeptide: MADSHGDTGATMPEAAAQEASVFSMTDVVLFSLIVGLITYWFLFRKKKEEVPEFTKIQAPTSSSVKESSFVEKMKKTGRNIVVFYGSQTGTAEEFANRLSKDAHRYGMRGMAADPEEYDLADLSSLPEINNALAVFCMATYGEGDPTDNAQDFYDWLQETDVDLSGVKYAVFGLGNKTYEHFNAMGKYVDQRLEQLGAQRIFELGMGDDDANLEEDFITWREQFWPAVCEHFGVEATGEESSIRQYELVLHTDIDVAKVYQGEMGRLKSYENQKPPFDAKNPFLATVTTNRKLNQGTERHLMHLELDISDSKIRYESGDHVAVYPANDSALVNQLGEILGADLDVVMSLNNLDEESNKKHPFPCPTSYRTALTYYLDITNPPRTNVLYELAQYAADPAEQEQLRKMASSSGEGKELYLSWVVEARRHILAILQDYPSLRPPIDHLCELLPRLQARYYSIASSSKVHPNSVHICAVAVEYETKAGRLNKGVATSWLRAKEPAGENGGRALVPMFVRKSQFRLPFKATTPVIMVGPGTGVAPFIGFIQERAWLRQQGKEVGETLLYYGCRRAAEDYLYREELAGFQKDGTLSQLNVAFSREQAQKVYVQHLLRRDKEHLWRLIHEGGAHIYVCGDARNMARDVQNTFYDIVAELGAMEHAQAVDYVKKLMTKGRYSLDVWS.

The Lumenal segment spans residues 1–21 (MADSHGDTGATMPEAAAQEAS). A helical transmembrane segment spans residues 22–42 (VFSMTDVVLFSLIVGLITYWF). The Cytoplasmic segment spans residues 43–679 (LFRKKKEEVP…KGRYSLDVWS (637 aa)). S64 carries the phosphoserine modification. The Flavodoxin-like domain maps to 81–225 (IVVFYGSQTG…DFITWREQFW (145 aa)). FMN is bound by residues 87–92 (SQTGTA), 139–142 (ATYG), 174–183 (LGNKTYEHFN), and D209. The 243-residue stretch at 280 to 522 (KNPFLATVTT…FVRKSQFRLP (243 aa)) folds into the FAD-binding FR-type domain. R299 contacts NADP(+). Residues R425, 455 to 458 (RYYS), 473 to 475 (CAV), Y479, and 489 to 492 (GVAT) each bind FAD. Residues T536, 597–598 (SR), 603–607 (KVYVQ), and D640 contribute to the NADP(+) site. W678 contributes to the FAD binding site.

The protein belongs to the NADPH--cytochrome P450 reductase family. In the N-terminal section; belongs to the flavodoxin family. It in the C-terminal section; belongs to the flavoprotein pyridine nucleotide cytochrome reductase family. FAD serves as cofactor. The cofactor is FMN.

The protein resides in the endoplasmic reticulum membrane. It catalyses the reaction 2 oxidized [cytochrome P450] + NADPH = 2 reduced [cytochrome P450] + NADP(+) + H(+). In terms of biological role, this enzyme is required for electron transfer from NADP to cytochrome P450 in microsomes. It can also provide electron transfer to heme oxygenase and cytochrome B5. This chain is NADPH--cytochrome P450 reductase, found in Oryctolagus cuniculus (Rabbit).